The sequence spans 127 residues: NADPH-dependent 7-cyano-7-deazaguanine reductase (127 aa).

Residue cysteine 40 is the Thioimide intermediate of the active site. The active-site Proton donor is aspartate 47. Substrate is bound by residues 62-64 and 81-82; these read VEL and HE.

Belongs to the GTP cyclohydrolase I family. QueF type 1 subfamily.

The protein resides in the cytoplasm. It catalyses the reaction 7-aminomethyl-7-carbaguanine + 2 NADP(+) = 7-cyano-7-deazaguanine + 2 NADPH + 3 H(+). It functions in the pathway tRNA modification; tRNA-queuosine biosynthesis. Its function is as follows. Catalyzes the NADPH-dependent reduction of 7-cyano-7-deazaguanine (preQ0) to 7-aminomethyl-7-deazaguanine (preQ1). This is NADPH-dependent 7-cyano-7-deazaguanine reductase from Campylobacter jejuni (strain RM1221).